The chain runs to 70 residues: Mu-conotoxin PnIVB (70 aa).

The signal sequence occupies residues 1–20 (MMSKLGVLLIICLLLCPLTA). A propeptide spanning residues 21-51 (VPQDGDQPADQPAERMQDDISSEHHPFFDPV) is cleaved from the precursor.

Post-translationally, contains 3 disulfide bonds. They are not added, since framework IV presents two different connectivities (I-V, II-III, IV-VI and I-III, II-V, IV-VI). Expressed by the venom duct.

The protein resides in the secreted. In terms of biological role, mu-conotoxins block voltage-gated sodium channels (Nav). Blocks reversibly sodium channels in molluskan neurons, but has no effect on sodium currents in bovine chromaffin cells or in rat brain synaptosomes. Induces paralysis in bivalve mollusks (Mytilus). No effect are observed on fish (Gambusia) and fly larvae (Sarcophaga). Is approximately 6 times more potent than PnIVA in blockade of the sodium current in Lymnaea neurons. This Conus pennaceus (Feathered cone) protein is Mu-conotoxin PnIVB.